The primary structure comprises 251 residues: Prolactin-7C1 (251 aa).

Positions 1–30 are cleaved as a signal peptide; that stretch reads MLLSLTHPSFLAMLPMLLMSNLLQWEGVTS. Asn57 carries an N-linked (GlcNAc...) asparagine glycan. Cystine bridges form between Cys101-Cys217 and Cys234-Cys242.

Belongs to the somatotropin/prolactin family. As to expression, expressed exclusively in the placenta. Expressed in spongiotrophoblast cells and trophoblast giant cells of the junctional zone and in labyrinthine trophoblast.

It is found in the secreted. The protein is Prolactin-7C1 (Prl7c1) of Mus musculus (Mouse).